A 297-amino-acid polypeptide reads, in one-letter code: Ectoine dioxygenase (297 aa).

Gln131 contacts L-ectoine. Lys137 is a 2-oxoglutarate binding site. The Fe cation site is built by His148, Asp150, and His249.

It belongs to the PhyH family. EctD subfamily. As to quaternary structure, homodimer. Fe(2+) serves as cofactor.

It catalyses the reaction L-ectoine + 2-oxoglutarate + O2 = 5-hydroxyectoine + succinate + CO2. Involved in the biosynthesis of 5-hydroxyectoine, called compatible solute, which helps organisms to survive extreme osmotic stress by acting as a highly soluble organic osmolyte. Catalyzes the 2-oxoglutarate-dependent selective hydroxylation of L-ectoine to yield (4S,5S)-5-hydroxyectoine. The polypeptide is Ectoine dioxygenase (Streptomyces anulatus (Streptomyces chrysomallus)).